The chain runs to 83 residues: RNA-binding protein Hfq (83 aa).

In terms of domain architecture, Sm spans aspartate 9 to valine 69.

It belongs to the Hfq family. As to quaternary structure, homohexamer.

Its function is as follows. RNA chaperone that binds small regulatory RNA (sRNAs) and mRNAs to facilitate mRNA translational regulation in response to envelope stress, environmental stress and changes in metabolite concentrations. Also binds with high specificity to tRNAs. This chain is RNA-binding protein Hfq, found in Exiguobacterium sibiricum (strain DSM 17290 / CCUG 55495 / CIP 109462 / JCM 13490 / 255-15).